The sequence spans 541 residues: MQLEQKSSLHCSKCRNFLQKFSQDMQAWNCRELDSPLPSDITLHNLEPARPDSGMSFSTDFDDDFFNLDLHQQERSASFGGVTQYSQQFLREKCSFSPYFHTSLETVDSGRTSLYGSNEQCGQLGGASSNGSTAMLHTPDGSNSHQTSFPSDFRMSESPDDTVSGKKTTTRRNAWGNMSYAELITTAIMASPEKRLTLAQVYEWMVQNVPYFRDKGDSNSSAGWKNSIRHNLSLHSRFMRIQNEGAGKSSWWVINPDAKPGRNPRRTRERSNTIETTTKAQLEKSRRGAKKRIKERALMGSLHSTLNGNSIAGSIQTISHDLYDDDSMQGAFDNVPSSFRPRTQSNLSIPGSSSRVSPAIGSDIYDDLEFPSWVGESVPAIPSDIVDRTDQMRIDATTHIGGVQIKQESKPIKTEPIAPPPSYHELNSVRGSCAQNPLLRNPIVPSTNFKPMPLPGAYGNYQNGGITPINWLSTSNSSPLPGIQSCGIVAAQHTVASSSALPIDLENLTLPDQPLMDTMDVDALIRHELSQAGGQHIHFDL.

Residues 118–150 (NEQCGQLGGASSNGSTAMLHTPDGSNSHQTSFP) are compositionally biased toward polar residues. Disordered stretches follow at residues 118-168 (NEQC…GKKT) and 252-291 (WVIN…GAKK). A DNA-binding region (fork-head) is located at residues 175-268 (WGNMSYAELI…KPGRNPRRTR (94 aa)). T273 carries the phosphothreonine modification. Phosphoserine; by CaMK2 is present on S319.

As to quaternary structure, interacts with rle-1. Interacts with unc-43 and tax-6. Interacts with jnk-1. Interacts with ftt-2. Interacts with prmt-1. Interacts with hcf-1. In terms of processing, phosphorylated by akt-1 and/or akt-2. Phosphorylated by sgk-1. Phosphorylated by unc-43. Phosphorylated by jnk-1. Dephosphorylated by tax-6 in vitro. Ubiquitinated. Ubiquitination by rle-1 leads to proteasome-mediated degradation. Post-translationally, methylation by prmt-1 prevents phosphorylation and promotes translocation to the nucleus to allow for daf-16-dependent transcription. In terms of tissue distribution, isoform b and isoform c are expressed in ectoderm, muscles, intestine and neurons. Isoform b is also expressed in the pharynx. The intestine appears to be the primary site of longevity function.

Its subcellular location is the nucleus. It localises to the cytoplasm. Functionally, forkhead-type transcription factor. Binds to the promoters of genes that contain the daf-16/FOXO binding element (DBE), TTGTTTAC, in their regulatory region. Functions in the Insulin/IGF-1-like signaling (IIS) mediated pathway which affects lipogenesis, lifespan, starvation survival, heat shock and oxidative stress responses, sleep, associative memory, and dauer formation. Longevity signaling predominantly arises from expression in the intestine. Acts in the intestine to mediate the role of slo-1 in age-associated decline in motor activity and longevity. Transcriptional activity of daf-16/FOXO is negatively regulated by interaction with host cell factor homolog hcf-1; and by cytoplasmic sequestration by association with ftt-2. Inhibition is required for the carbon dioxide (CO2) avoidance response. Upon loss of inhibition, daf-16 translocates to the nucleus to regulate genes that result in delayed reproduction and growth while increasing stress resistance starvation tolerance and longevity. Association with arginine methyltransferase prmt-1 prevents phosphorylation and allows for translocation to the nucleus and the subsequent transcription of longevity-related genes. Modulation of its activity by cGMP levels in sensory neurons regulates lifespan. Has a protective role against muscle dystrophy. Involved in mediating protection against aberrant protein aggregation proteotoxicity. Influences transcription of genes that code for proteins involved in immunity as part of a general stress response. Targets genes that inhibit and stimulate tumor growth. Targets kinases, phosphatases and transcription factors that are primarily involved in signaling and gene regulation. Thought to regulate ins-7 in FOXO-to-FOXO signaling, which coordinates daf-16 expression. Activity is positively regulated by shc-1-mediated inhibition of daf-2 and activation of JNK pathway. Through the regulation of its activity by shc-1-mediated inhibition of daf-2 and activation of JNK pathway, plays a role in maintaining the integrity of the gonad. Functions by indirect interaction with jnk-1 of the mitogen-activated protein kinase (MAPK) pathway. Involved in increased proteasome activity by activating expression of rpn-6.1 in response to proteotoxic stress, leading to enhanced assembly of the 26S proteasome, followed by higher proteasome activity. Also regulates proteasome activity in the intestine by preventing expression of deubiquitinase ubh-4. Represses transcription of natc-1. Involved in regulation of srh-234 expression. Binds to the promoter of the AMPK-gamma regulatory subunit, aakg-4, and activates its transcription. Also activates transcription of AMPK-gamma regulatory subunit, aakg-1. Maintains endoplasmic reticulum (ER) function by inducing protein degradation and elimination to remove misfolded secretory proteins from the ER independently of the ire-1/xbp-1 unfolded protein response pathway. Regulates epidermal innate immunity to nematophagous fungal infection and physical wounding which trigger bli-3 induced ROS release, leading to daf-16 activation independently of daf-2 signaling. May negatively regulate resistance to stress caused by oxidized cholesterol adducts by preventing the activation of daf-9 and nuclear hormone receptor daf-12, two members of the steroid signaling pathway. Promotes apoptosis during embryonic development. Probably through the regulation of the autophagy genes atg-18 and atg-16.2, plays a role in regulating stem cell number in the germline during larval development. Plays a role in learning and memory; including associative memory, and aversive gustatory associated learning known as salt avoidance learning. Plays a role in regulating gene transcription in response to white light exposure. Binds to the promoter of dex-1 to positively regulate its expression in seam cells during the dauer phase. Plays a role in transgenerational lipid accumulation in response to a high-fat diet. In terms of biological role, functions in the Insulin/IGF-1-like signaling (IIS) mediated pathway. May play a role in lifespan modulation, but less significant than that played by isoforms d and f. Its function is as follows. Functions in the Insulin/IGF-1-like signaling (IIS) mediated pathway. Transcript level in the early adult may play a role in lifespan modulation, but effect is more significant than that played by isoform a. In Caenorhabditis elegans, this protein is Forkhead box protein O.